Consider the following 461-residue polypeptide: Cysteine--tRNA ligase (461 aa).

Residue Cys-28 coordinates Zn(2+). The 'HIGH' region motif lies at 30–40 (VTIYDLCHIGH). Residues Cys-209, His-234, and Glu-238 each coordinate Zn(2+). The short motif at 266–270 (KMSKS) is the 'KMSKS' region element. Lys-269 provides a ligand contact to ATP.

The protein belongs to the class-I aminoacyl-tRNA synthetase family. In terms of assembly, monomer. It depends on Zn(2+) as a cofactor.

It is found in the cytoplasm. The catalysed reaction is tRNA(Cys) + L-cysteine + ATP = L-cysteinyl-tRNA(Cys) + AMP + diphosphate. This chain is Cysteine--tRNA ligase, found in Vibrio atlanticus (strain LGP32) (Vibrio splendidus (strain Mel32)).